Consider the following 381-residue polypeptide: 1-deoxy-D-xylulose 5-phosphate reductoisomerase (381 aa).

Residues Thr-10, Gly-11, Ser-12, Ile-13, and Asn-120 each contribute to the NADPH site. Residue Lys-121 participates in 1-deoxy-D-xylulose 5-phosphate binding. An NADPH-binding site is contributed by Glu-122. Asp-146 serves as a coordination point for Mn(2+). 4 residues coordinate 1-deoxy-D-xylulose 5-phosphate: Ser-147, Glu-148, Ser-172, and His-195. Glu-148 contacts Mn(2+). Position 201 (Gly-201) interacts with NADPH. Residues Ser-208, Asn-213, Lys-214, and Glu-217 each contribute to the 1-deoxy-D-xylulose 5-phosphate site. Residue Glu-217 coordinates Mn(2+).

The protein belongs to the DXR family. Requires Mg(2+) as cofactor. It depends on Mn(2+) as a cofactor.

The enzyme catalyses 2-C-methyl-D-erythritol 4-phosphate + NADP(+) = 1-deoxy-D-xylulose 5-phosphate + NADPH + H(+). It functions in the pathway isoprenoid biosynthesis; isopentenyl diphosphate biosynthesis via DXP pathway; isopentenyl diphosphate from 1-deoxy-D-xylulose 5-phosphate: step 1/6. Its function is as follows. Catalyzes the NADPH-dependent rearrangement and reduction of 1-deoxy-D-xylulose-5-phosphate (DXP) to 2-C-methyl-D-erythritol 4-phosphate (MEP). This is 1-deoxy-D-xylulose 5-phosphate reductoisomerase from Thermodesulfovibrio yellowstonii (strain ATCC 51303 / DSM 11347 / YP87).